We begin with the raw amino-acid sequence, 833 residues long: G-type lectin S-receptor-like serine/threonine-protein kinase RKS1 (833 aa).

The signal sequence occupies residues 1-18; sequence MKVVFVIFFFFLFQFCIS. One can recognise a Bulb-type lectin domain in the interval 19-144; it reads VDTIMRRQSL…VTGRSFWESF (126 aa). At 19-440 the chain is on the extracellular side; that stretch reads VDTIMRRQSL…NGLSGKRRVL (422 aa). 6 N-linked (GlcNAc...) asparagine glycosylation sites follow: Asn79, Asn92, Asn100, Asn109, Asn228, and Asn256. Positions 280–330 constitute an EGF-like domain; it reads PKEQCDNYAHCGPNGYCDSPSSKTFECTCLPGFEPKFPRHWFLRDSSGGCT. Disulfide bonds link Cys284–Cys296, Cys290–Cys306, and Cys308–Cys329. In terms of domain architecture, PAN spans 338–421; it reads CSEKDGFVKL…SGQDFYIRVD (84 aa). Asn363 and Asn376 each carry an N-linked (GlcNAc...) asparagine glycan. 2 disulfide bridges follow: Cys369-Cys396 and Cys373-Cys379. The chain crosses the membrane as a helical span at residues 441–461; sequence LILISLIAAVMLLTVILFCVV. Residues 462–833 are Cytoplasmic-facing; it reads RERRKSNRHR…DVTFSDIQGR (372 aa). In terms of domain architecture, Protein kinase spans 515-800; sequence FSSQNKLGAG…NLPNPKHPAF (286 aa). ATP-binding positions include 521 to 529 and Lys543; that span reads LGAGGFGPV. 2 positions are modified to phosphoserine: Ser549 and Ser564. The segment at 604–621 is caM-binding; sequence EQRAELDWPKRMEIVRGI. The active-site Proton acceptor is the Asp640. Phosphoserine occurs at positions 644 and 657. Phosphothreonine is present on Thr674. A phosphoserine mark is found at Ser717 and Ser821.

It belongs to the protein kinase superfamily. Ser/Thr protein kinase family.

The protein localises to the cell membrane. The catalysed reaction is L-seryl-[protein] + ATP = O-phospho-L-seryl-[protein] + ADP + H(+). It catalyses the reaction L-threonyl-[protein] + ATP = O-phospho-L-threonyl-[protein] + ADP + H(+). This Arabidopsis thaliana (Mouse-ear cress) protein is G-type lectin S-receptor-like serine/threonine-protein kinase RKS1 (RKS1).